A 243-amino-acid chain; its full sequence is Aspartate/glutamate leucyltransferase (243 aa).

The protein belongs to the R-transferase family. Bpt subfamily.

The protein localises to the cytoplasm. It carries out the reaction N-terminal L-glutamyl-[protein] + L-leucyl-tRNA(Leu) = N-terminal L-leucyl-L-glutamyl-[protein] + tRNA(Leu) + H(+). The enzyme catalyses N-terminal L-aspartyl-[protein] + L-leucyl-tRNA(Leu) = N-terminal L-leucyl-L-aspartyl-[protein] + tRNA(Leu) + H(+). Its function is as follows. Functions in the N-end rule pathway of protein degradation where it conjugates Leu from its aminoacyl-tRNA to the N-termini of proteins containing an N-terminal aspartate or glutamate. The protein is Aspartate/glutamate leucyltransferase of Teredinibacter turnerae (strain ATCC 39867 / T7901).